A 1080-amino-acid chain; its full sequence is MIDSSKKQPQGFPEILTAEDFEPFKEKECLEGSNQKSLKEVLQLRLQQRRTREQLVDQGIMPPLKSPAAFHEQIKSLERARTENFLKHKIRSRPDRSELVRMHILEETFAEPSLQATQMKLKRARLADDLNEKIAQRPGPMELVEKNILPVDSSVKEAIIGVVKEDYPHTHGEFSFDEDSSDALSPDQPASQESQGSAASPSEPKVSASPPPVTASTPAQFTSVSPAVPEFLKTPLTADQPPTRSTAPVLPTNTVSSAKSGPMLVKQSHPKNPNDKHRSKKCKDPKPRVKKLKYHQYIPPNQKGEKSEPQMDSNYARLLQQQQLFLQLQILSQQQQQQQQQHYNYQTILPAPIKTDKNSSSGSNSGSSSSMPARRPGPLPSSLDDLKVSELKTELKLRGLPVSGTKPDLIERLKPYQEVTSSNLATGSIVAVSSATIVTSNPEVTVALPVTTLHNAVTSSVSTFKADLALPATSSVPHVENAHSPLPISPSPSEQSSLSTDDTNMTDTFTEIMTMMSPSQLLCSSPLRVVSHDDSLSPSSSTLSTLELDAAEKDRKLQEKEKQIEELKRKLEQEQKLVEVLKMQLEVEKRGQQRPPDPQPSDPPHPFNTSDPKHGSVGSSIKDEASLPDCSSPQQPITVPGHSVGQPISTGSQTLVAKKTVVVKQEVPMAQAEQQNVVSQFYLSSQGQPPALVAQPQALLTTQTTQLLLPVSIQGSNVTSVQLPVGSLQLQTPAQGRVQAQPHVAAATQVPAAALPSALTSALPQKQEAFPQHVLGQPQPVRKVFTNSAPNTVLQYQRQPGPTNQQPFVSKTSNPALQSRTAPLAPLQNGPSLASKPSSPPPPQQFVVQHSLFATPITKTKDPPRYEEAIKQTRSTQPALPEVSSVHSQQMDDLFDILIKSGEISFPIKEEPSPISKMKPVTASITTMPVNTVVSRPPPQVQIAPPVSLEPVNSLSASLENQLEAFLDGTLPSATDTGPLQNSSEDRESFSLIEDLQNDLLSHSSMLYQSHSPMETSEAQLVSGTPCLSLDLSDSNLDNMEWLDITMPTTSSGLTPLSTTAPSMFSADFLDPQDLPLPWD.

Residues 40 to 65 form an RPEL 1 repeat; the sequence is EVLQLRLQQRRTREQLVDQGIMPPLK. Serine 66 carries the phosphoserine modification. 2 RPEL repeats span residues 84–109 and 128–153; these read NFLK…EETF and DDLN…PVDS. Disordered stretches follow at residues 170-222, 234-311, 352-384, and 477-501; these read THGE…AQFT, TPLT…EPQM, PIKT…SSLD, and PHVE…LSTD. 2 stretches are compositionally biased toward polar residues: residues 188–200 and 240–259; these read QPAS…SAAS and QPPT…SSAK. The segment covering 272–287 has biased composition (basic and acidic residues); the sequence is NPNDKHRSKKCKDPKP. A compositionally biased stretch (low complexity) spans 358–370; sequence NSSSGSNSGSSSS. In terms of domain architecture, SAP spans 383–417; that stretch reads LDDLKVSELKTELKLRGLPVSGTKPDLIERLKPYQ. 3 positions are modified to phosphoserine: serine 531, serine 535, and serine 537. Positions 539–594 form a coiled coil; it reads SSSTLSTLELDAAEKDRKLQEKEKQIEELKRKLEQEQKLVEVLKMQLEVEKRGQQR. Residues 557–585 are required for interaction with itself and with MRTFA; it reads LQEKEKQIEELKRKLEQEQKLVEVLKMQL. Disordered stretches follow at residues 588–646 and 794–846; these read EKRG…SVGQ and LQYQ…PQQF. A compositionally biased stretch (pro residues) spans 595–606; the sequence is PPDPQPSDPPHP. Lysine 622 participates in a covalent cross-link: Glycyl lysine isopeptide (Lys-Gly) (interchain with G-Cter in SUMO1). Polar residues predominate over residues 794–821; the sequence is LQYQRQPGPTNQQPFVSKTSNPALQSRT. A Phosphoserine modification is found at serine 913. Residues 969–988 form a disordered region; that stretch reads GTLPSATDTGPLQNSSEDRE. Over residues 972 to 983 the composition is skewed to polar residues; sequence PSATDTGPLQNS.

In terms of assembly, interacts with MRTFA and SRF. In terms of processing, O-glycosylated. In terms of tissue distribution, widely expressed. High expression in heart, brain and testis. Lower expression in lung, liver and kidney.

It localises to the nucleus. Its function is as follows. Acts as a transcriptional coactivator of serum response factor (SRF). Required for skeletal myogenic differentiation. The polypeptide is Myocardin-related transcription factor B (Mrtfb) (Mus musculus (Mouse)).